A 230-amino-acid polypeptide reads, in one-letter code: uncharacterized protein (230 aa).

A signal peptide spans Met-1–Arg-16. 4 helical membrane-spanning segments follow: residues Val-27–Ile-47, Leu-118–Phe-138, Phe-150–Leu-170, and Ser-172–Phe-191.

The protein resides in the cytoplasm. Its subcellular location is the nucleus membrane. This is an uncharacterized protein from Schizosaccharomyces pombe (strain 972 / ATCC 24843) (Fission yeast).